The primary structure comprises 99 residues: UPF0235 protein Cag_0319 (99 aa).

Belongs to the UPF0235 family.

In Chlorobium chlorochromatii (strain CaD3), this protein is UPF0235 protein Cag_0319.